A 372-amino-acid polypeptide reads, in one-letter code: Queuine tRNA-ribosyltransferase (372 aa).

Asp89 functions as the Proton acceptor in the catalytic mechanism. Substrate is bound by residues Asp89 to Phe93, Asp161, and Gly232. The tract at residues Gly262–Ser268 is RNA binding. Asp281 (nucleophile) is an active-site residue. An RNA binding; important for wobble base 34 recognition region spans residues Thr286–Arg290. Zn(2+)-binding residues include Cys319, Cys321, Cys324, and His351.

The protein belongs to the queuine tRNA-ribosyltransferase family. In terms of assembly, homodimer. Within each dimer, one monomer is responsible for RNA recognition and catalysis, while the other monomer binds to the replacement base PreQ1. The cofactor is Zn(2+).

The catalysed reaction is 7-aminomethyl-7-carbaguanine + guanosine(34) in tRNA = 7-aminomethyl-7-carbaguanosine(34) in tRNA + guanine. Its pathway is tRNA modification; tRNA-queuosine biosynthesis. Catalyzes the base-exchange of a guanine (G) residue with the queuine precursor 7-aminomethyl-7-deazaguanine (PreQ1) at position 34 (anticodon wobble position) in tRNAs with GU(N) anticodons (tRNA-Asp, -Asn, -His and -Tyr). Catalysis occurs through a double-displacement mechanism. The nucleophile active site attacks the C1' of nucleotide 34 to detach the guanine base from the RNA, forming a covalent enzyme-RNA intermediate. The proton acceptor active site deprotonates the incoming PreQ1, allowing a nucleophilic attack on the C1' of the ribose to form the product. After dissociation, two additional enzymatic reactions on the tRNA convert PreQ1 to queuine (Q), resulting in the hypermodified nucleoside queuosine (7-(((4,5-cis-dihydroxy-2-cyclopenten-1-yl)amino)methyl)-7-deazaguanosine). The protein is Queuine tRNA-ribosyltransferase of Chlamydia felis (strain Fe/C-56) (Chlamydophila felis).